The sequence spans 438 residues: GRAS family protein TF80 (438 aa).

Positions 13-436 (LRYDSHGSNP…RPLFSVSAWK (424 aa)) constitute a GRAS domain. The interval 20 to 81 (SNPMIPLIEC…YKIVKHLPGV (62 aa)) is leucine repeat I (LRI). The VHIID stretch occupies residues 100–165 (QKYFYDLCPF…GGPPFLKITG (66 aa)). The short motif at 131-135 (VHIID) is the VHIID element. The tract at residues 175–207 (QMSFHLTTEAGILDFPLQFNPIISKLEDVDFEN) is leucine repeat II (LRII). The interval 216–359 (VAISSVLQLH…SMLLGEQIKN (144 aa)) is PFYRE. The LXXLL motif motif lies at 224 to 228 (LHSLL). Positions 362–436 (TCEGVDRKER…RPLFSVSAWK (75 aa)) are SAW.

This sequence belongs to the GRAS family. Interacts with RAM1.

The protein resides in the nucleus. The sequence is that of GRAS family protein TF80 (TF80) from Medicago truncatula (Barrel medic).